Reading from the N-terminus, the 228-residue chain is 5'(3')-deoxyribonucleotidase, mitochondrial (228 aa).

Residues 1–31 (MIRLGGWCARRLCSAAVPAGRRGAAGGLGLA) constitute a mitochondrion transit peptide. The active-site Nucleophile is the Asp41. Residues Asp41 and Asp43 each coordinate Mg(2+). The Proton donor role is filled by Asp43. Residues Asp43, Phe49, Phe75, Trp76, Val77, Trp96, Thr130, and Lys165 each contribute to the substrate site. Asp176 is a Mg(2+) binding site.

It belongs to the 5'(3')-deoxyribonucleotidase family. Homodimer. It depends on Mg(2+) as a cofactor. In terms of tissue distribution, highly expressed in heart, brain and skeletal muscle. Detected at very low levels in kidney and pancreas.

Its subcellular location is the mitochondrion. Functionally, dephosphorylates specifically the 5' and 2'(3')-phosphates of uracil and thymine deoxyribonucleotides, and so protects mitochondrial DNA replication from excess dTTP. Has only marginal activity towards dIMP and dGMP. The sequence is that of 5'(3')-deoxyribonucleotidase, mitochondrial (NT5M) from Homo sapiens (Human).